We begin with the raw amino-acid sequence, 150 residues long: Anthranilate synthase component 1 (150 aa).

An L-tryptophan-binding site is contributed by serine 40. Arginine 119 lines the chorismate pocket.

It belongs to the anthranilate synthase component I family. Heterotetramer consisting of two non-identical subunits: a beta subunit (TrpG) and a large alpha subunit (TrpE). The cofactor is Mg(2+).

It carries out the reaction chorismate + L-glutamine = anthranilate + pyruvate + L-glutamate + H(+). Its pathway is amino-acid biosynthesis; L-tryptophan biosynthesis; L-tryptophan from chorismate: step 1/5. Its activity is regulated as follows. Feedback inhibited by tryptophan. Part of a heterotetrameric complex that catalyzes the two-step biosynthesis of anthranilate, an intermediate in the biosynthesis of L-tryptophan. In the first step, the glutamine-binding beta subunit (TrpG) of anthranilate synthase (AS) provides the glutamine amidotransferase activity which generates ammonia as a substrate that, along with chorismate, is used in the second step, catalyzed by the large alpha subunit of AS (TrpE) to produce anthranilate. In the absence of TrpG, TrpE can synthesize anthranilate directly from chorismate and high concentrations of ammonia. This Citrobacter freundii protein is Anthranilate synthase component 1 (trpE).